We begin with the raw amino-acid sequence, 379 residues long: dTDP-3-amino-3,4,6-trideoxy-alpha-D-glucose transaminase (379 aa).

Pyridoxal 5'-phosphate is bound by residues Gly-67, Gln-167, 188-193, Tyr-221, Tyr-227, 235-237, and Tyr-318; these read SFYPGK and NSR. Position 193 is an N6-(pyridoxal phosphate)lysine (Lys-193).

This sequence belongs to the degT/dnrJ/eryC1 family. In terms of assembly, homodimer. It depends on pyridoxal 5'-phosphate as a cofactor.

It catalyses the reaction dTDP-3-amino-3,4,6-trideoxy-alpha-D-glucose + 2-oxoglutarate = dTDP-3-dehydro-4,6-dideoxy-alpha-D-glucose + L-glutamate. It functions in the pathway antibiotic biosynthesis. Involved in the biosynthesis of dTDP-alpha-D-desosamine, a sugar found in several bacterial macrolide antibiotics. Catalyzes the reversible transfer of the amino group from L-glutamate to the C-3 position of dTDP-3-keto-4,6-deoxyglucose to yield dTDP-3-amino-3,4,6-trideoxyglucose. In Streptomyces venezuelae, this protein is dTDP-3-amino-3,4,6-trideoxy-alpha-D-glucose transaminase.